The primary structure comprises 501 residues: GMP synthase [glutamine-hydrolyzing] (501 aa).

The Glutamine amidotransferase type-1 domain occupies 1–185; sequence MVLVVDYGSQ…LFNVCKLEKN (185 aa). Cysteine 75 serves as the catalytic Nucleophile. Active-site residues include histidine 159 and glutamate 161. Positions 186 to 376 constitute a GMPS ATP-PPase domain; the sequence is WKIGDLVEEK…LGIPDRIINR (191 aa). Residue 213–219 coordinates ATP; sequence SGGVDSS.

Homodimer.

The enzyme catalyses XMP + L-glutamine + ATP + H2O = GMP + L-glutamate + AMP + diphosphate + 2 H(+). It functions in the pathway purine metabolism; GMP biosynthesis; GMP from XMP (L-Gln route): step 1/1. Functionally, catalyzes the synthesis of GMP from XMP. This Thermotoga maritima (strain ATCC 43589 / DSM 3109 / JCM 10099 / NBRC 100826 / MSB8) protein is GMP synthase [glutamine-hydrolyzing] (guaA).